A 215-amino-acid polypeptide reads, in one-letter code: Sodium channel regulatory subunit beta-2 (215 aa).

Positions 1 to 29 (MHRDAWLPRPAFSLTGLSLFFSLVPPGRS) are cleaved as a signal peptide. Topologically, residues 30–157 (MEVTVPATLN…XEEPPERDST (128 aa)) are extracellular. Residues 32–154 (VTVPATLNVL…QVLXEEPPER (123 aa)) enclose the Ig-like C2-type domain. 3 N-linked (GlcNAc...) asparagine glycosylation sites follow: asparagine 42, asparagine 66, and asparagine 74. Cystine bridges form between cysteine 50–cysteine 127 and cysteine 72–cysteine 75. The chain crosses the membrane as a helical span at residues 158–179 (VAVIVGASVGGFLAVVILVLMV). The Cytoplasmic portion of the chain corresponds to 180–215 (VKCVRRKKEQKLSTDDLKTEEEGKTDGEGNPDDGAK). The interval 187–215 (KEQKLSTDDLKTEEEGKTDGEGNPDDGAK) is disordered. Basic and acidic residues predominate over residues 189–215 (QKLSTDDLKTEEEGKTDGEGNPDDGAK). Residue serine 192 is modified to Phosphoserine. Threonine 204 carries the post-translational modification Phosphothreonine.

Belongs to the sodium channel auxiliary subunit SCN2B (TC 8.A.17) family. As to quaternary structure, a voltage-gated sodium (Nav) channel consists of an ion-conducting pore-forming alpha subunit functional on its own that is regulated by one or more beta subunits. The beta subunit SCN2B is disulfide-linked to the pore-forming alpha subunit. Interacts with SCN1A; regulatory subunit of SCN1A/Nav1.1. Interacts with SCN2A; regulatory subunit of SCN2A/Nav1.2. Interacts with SCN3A; regulatory subunit of SCN3A/Nav1.3. Interacts with SCN5A; regulatory subunit of SCN5A/Nav1.5. Interacts with SCN8A; regulatory subunit of SCN8A/Nav1.6. Interacts with SCN9A; regulatory subunit of SCN9A/Nav1.7. Interacts with SCN10A; regulatory subunit of SCN10A/Nav1.8. Interacts with TNR; may play a crucial role in clustering and regulation of activity of SCN2B-containing Nav channels at nodes of Ranvier.

The protein resides in the cell membrane. The protein localises to the cell projection. It is found in the axon. Its function is as follows. Regulatory subunit of multiple voltage-gated sodium (Nav) channels, that directly mediate the depolarization of excitable membranes. Navs, also called VGSCs (voltage-gated sodium channels) or VDSCs (voltage-dependent sodium channels), operate by switching between closed and open conformations depending on the voltage difference across the membrane. In the open conformation they allow Na(+) ions to selectively pass through the pore, along their electrochemical gradient. The influx of Na+ ions provokes membrane depolarization, initiating the propagation of electrical signals throughout cells and tissues. The accessory beta subunits participate in localization and functional modulation of the Nav channels. Modulates the activity of SCN1A/Nav1.1, SCN2A/Nav1.2, SCN2A/Nav1.3, SCN5A/Nav1.5, SCN8A/Nav1.6, SCN9A/Nav1.7 and SCN10A/Nav1.8. The sequence is that of Sodium channel regulatory subunit beta-2 from Canis lupus familiaris (Dog).